We begin with the raw amino-acid sequence, 260 residues long: Tropinone reductase homolog At1g07450 (260 aa).

An NADP(+)-binding site is contributed by 14–38 (LVTGGSKGIGYAIVEELVGFGARVH). Serine 147 is a substrate binding site. Tyrosine 159 acts as the Proton acceptor in catalysis.

This sequence belongs to the short-chain dehydrogenases/reductases (SDR) family. SDR65C subfamily.

The polypeptide is Tropinone reductase homolog At1g07450 (Arabidopsis thaliana (Mouse-ear cress)).